Consider the following 323-residue polypeptide: o-succinylbenzoate synthase (323 aa).

K134 serves as the catalytic Proton donor. 3 residues coordinate Mg(2+): D162, E191, and D214. The active-site Proton acceptor is the K236.

It belongs to the mandelate racemase/muconate lactonizing enzyme family. MenC type 1 subfamily. Requires a divalent metal cation as cofactor.

It carries out the reaction (1R,6R)-6-hydroxy-2-succinyl-cyclohexa-2,4-diene-1-carboxylate = 2-succinylbenzoate + H2O. It participates in quinol/quinone metabolism; 1,4-dihydroxy-2-naphthoate biosynthesis; 1,4-dihydroxy-2-naphthoate from chorismate: step 4/7. It functions in the pathway quinol/quinone metabolism; menaquinone biosynthesis. In terms of biological role, converts 2-succinyl-6-hydroxy-2,4-cyclohexadiene-1-carboxylate (SHCHC) to 2-succinylbenzoate (OSB). The protein is o-succinylbenzoate synthase of Yersinia pseudotuberculosis serotype O:1b (strain IP 31758).